A 504-amino-acid polypeptide reads, in one-letter code: Protein nucleotidyltransferase YdiU (504 aa).

8 residues coordinate ATP: glycine 99, glycine 101, arginine 102, lysine 122, aspartate 134, glycine 135, arginine 185, and arginine 192. Aspartate 261 functions as the Proton acceptor in the catalytic mechanism. Positions 262 and 271 each coordinate Mg(2+). Aspartate 271 contributes to the ATP binding site.

It belongs to the SELO family. Mg(2+) is required as a cofactor. Requires Mn(2+) as cofactor.

It carries out the reaction L-seryl-[protein] + ATP = 3-O-(5'-adenylyl)-L-seryl-[protein] + diphosphate. The enzyme catalyses L-threonyl-[protein] + ATP = 3-O-(5'-adenylyl)-L-threonyl-[protein] + diphosphate. The catalysed reaction is L-tyrosyl-[protein] + ATP = O-(5'-adenylyl)-L-tyrosyl-[protein] + diphosphate. It catalyses the reaction L-histidyl-[protein] + UTP = N(tele)-(5'-uridylyl)-L-histidyl-[protein] + diphosphate. It carries out the reaction L-seryl-[protein] + UTP = O-(5'-uridylyl)-L-seryl-[protein] + diphosphate. The enzyme catalyses L-tyrosyl-[protein] + UTP = O-(5'-uridylyl)-L-tyrosyl-[protein] + diphosphate. In terms of biological role, nucleotidyltransferase involved in the post-translational modification of proteins. It can catalyze the addition of adenosine monophosphate (AMP) or uridine monophosphate (UMP) to a protein, resulting in modifications known as AMPylation and UMPylation. This is Protein nucleotidyltransferase YdiU from Methylococcus capsulatus (strain ATCC 33009 / NCIMB 11132 / Bath).